The chain runs to 312 residues: Bark storage protein A (312 aa).

An N-terminal signal peptide occupies residues 1–24 (MPQQSMQASLIDPIAEIERSNCKI). A glycan (N-linked (GlcNAc...) asparagine) is linked at Asn70.

To wound-inducible poplar endochitinases. In terms of assembly, monomer. Bark.

Its function is as follows. May play a role in nitrogen storage. This is Bark storage protein A (BSPA) from Populus deltoides (Eastern poplar).